We begin with the raw amino-acid sequence, 1228 residues long: Apical endosomal glycoprotein (1228 aa).

Positions M1 to G21 are cleaved as a signal peptide. Topologically, residues T23–P1159 are extracellular. An LDL-receptor class A 1; truncated domain is found at H28–E49. The region spanning F65–L223 is the MAM 1 domain. Residue N204 is glycosylated (N-linked (GlcNAc...) asparagine). In terms of domain architecture, LDL-receptor class A 2 spans R229–S267. Intrachain disulfides connect C230–C242, C237–C255, and C249–C266. The 157-residue stretch at M270–L426 folds into the MAM 2 domain. 2 N-linked (GlcNAc...) asparagine glycosylation sites follow: N290 and N340. In terms of domain architecture, LDL-receptor class A 3 spans T457 to G492. 3 disulfide bridges follow: C458–C469, C465–C482, and C476–C491. 4 consecutive MAM domains span residues G492–P649, L659–A815, K817–Q975, and G977–Q1144. N-linked (GlcNAc...) asparagine glycosylation is present at N641. A glycan (N-linked (GlcNAc...) asparagine) is linked at N841. A helical transmembrane segment spans residues V1160–W1180. Residues H1181–A1228 lie on the Cytoplasmic side of the membrane.

The protein localises to the membrane. In terms of biological role, probably involved in the sorting and selective transport of receptors and ligands across polarized epithelia. The sequence is that of Apical endosomal glycoprotein from Mus musculus (Mouse).